The following is an 83-amino-acid chain: Large ribosomal subunit protein eL31 (83 aa).

The protein belongs to the eukaryotic ribosomal protein eL31 family.

The sequence is that of Large ribosomal subunit protein eL31 from Methanococcus vannielii (strain ATCC 35089 / DSM 1224 / JCM 13029 / OCM 148 / SB).